Here is a 470-residue protein sequence, read N- to C-terminus: Isocitrate dehydrogenase (NAD(+)), mitochondrial (470 aa).

The N-terminal 26 residues, 1 to 26 (MTRVERGRVLARAIERAVAHRASARR), are a transit peptide targeting the mitochondrion. NAD(+)-binding positions include 138–140 (TVT) and Asn-159. D-threo-isocitrate contacts are provided by residues 157-163 (SPNGAMR), Arg-193, Tyr-200, Lys-275, and Asp-319. Residue Asp-319 participates in Mg(2+) binding. Lys-324 is an NAD(+) binding site. Asp-343 contacts D-threo-isocitrate. Mg(2+) is bound by residues Asp-343 and Asp-347. Residues 380 to 385 (HGTVAD) and Asn-399 contribute to the NAD(+) site.

Belongs to the isocitrate and isopropylmalate dehydrogenases family. Forms homodimers. Mg(2+) is required as a cofactor. Mn(2+) serves as cofactor.

Its subcellular location is the mitochondrion. It catalyses the reaction D-threo-isocitrate + NAD(+) = 2-oxoglutarate + CO2 + NADH. The homodimer exhibits allosteric regulation by isocitrate. Its function is as follows. Performs an essential role in the oxidative function of the tricarboxylic acid cycle and respiration. Catalyzes the decarboxylation of isocitrate to produce 2-oxoglutarate and generate NADH to provide electrons for energy production. The chain is Isocitrate dehydrogenase (NAD(+)), mitochondrial from Ostreococcus tauri.